A 275-amino-acid polypeptide reads, in one-letter code: Succinate dehydrogenase [ubiquinone] iron-sulfur subunit, mitochondrial (275 aa).

Residues 1 to 24 (MFSRRIQVLSPFLKHFVNRNARMM) constitute a mitochondrion transit peptide. The 2Fe-2S ferredoxin-type domain occupies 57-137 (PEVKPKLQKY…PTKIYPLPHC (81 aa)). Positions 98, 103, 106, and 118 each coordinate [2Fe-2S] cluster. One can recognise a 4Fe-4S ferredoxin-type domain in the interval 178–208 (DRAKLDGLYECILCACCSTSCPSYWWNSEEY). 3 residues coordinate [4Fe-4S] cluster: Cys188, Cys191, and Cys194. Cys198 provides a ligand contact to [3Fe-4S] cluster. A ubiquinone is bound at residue Trp203. Cys245 and Cys251 together coordinate [3Fe-4S] cluster. Cys255 provides a ligand contact to [4Fe-4S] cluster.

It belongs to the succinate dehydrogenase/fumarate reductase iron-sulfur protein family. As to quaternary structure, component of complex II composed of four subunits: a flavoprotein (FP), an iron-sulfur protein (IP), and a cytochrome b composed of a large and a small subunit. [2Fe-2S] cluster is required as a cofactor. Requires [3Fe-4S] cluster as cofactor. It depends on [4Fe-4S] cluster as a cofactor.

The protein localises to the mitochondrion inner membrane. The catalysed reaction is a quinone + succinate = fumarate + a quinol. It functions in the pathway carbohydrate metabolism; tricarboxylic acid cycle; fumarate from succinate (eukaryal route): step 1/1. Functionally, iron-sulfur protein (IP) subunit of succinate dehydrogenase (SDH) that is involved in complex II of the mitochondrial electron transport chain and is responsible for transferring electrons from succinate to ubiquinone (coenzyme Q). The chain is Succinate dehydrogenase [ubiquinone] iron-sulfur subunit, mitochondrial (sdh2) from Schizosaccharomyces pombe (strain 972 / ATCC 24843) (Fission yeast).